The primary structure comprises 344 residues: MLNALYPLFRPALFSMDAEDAHHFTLNNLLRAQRLGLGGCIGNRIAEDPRTVMGVRFPNPVGLAAGLDKDGAYIDGLASFGFGFIEVGTVTPRAQPGNPRPRMFRLPQADALINRMGFNNGGVDAFIANVKASRWKAEGGVLGLNIGKNADTPIERAADDYLYCLERVYPHASYVTVNISSPNTKNLRQLQGASELDSLLSTLKAAQQRLADQHKRYVPVALKIAPDLDADQIGNIGDALVRHKIDGVIATNTTISRDAVKGLPHAEEAGGLSGRPVFEQSTHVVRALRQVVGDAVPIIGVGGIFSGADARAKIDAGAKLVQVYSGLIYRGPTLVRDCAAALRA.

FMN is bound by residues 65 to 69 (AGLDK) and Thr-89. Lys-69 provides a ligand contact to substrate. Position 114–118 (114–118 (NRMGF)) interacts with substrate. Positions 145 and 178 each coordinate FMN. Residue Asn-178 coordinates substrate. The active-site Nucleophile is Ser-181. Asn-183 lines the substrate pocket. FMN is bound by residues Lys-223 and Thr-251. 252-253 (NT) is a substrate binding site. Residues Gly-274, Gly-303, and 324–325 (YS) each bind FMN.

It belongs to the dihydroorotate dehydrogenase family. Type 2 subfamily. As to quaternary structure, monomer. FMN is required as a cofactor.

It is found in the cell membrane. It carries out the reaction (S)-dihydroorotate + a quinone = orotate + a quinol. Its pathway is pyrimidine metabolism; UMP biosynthesis via de novo pathway; orotate from (S)-dihydroorotate (quinone route): step 1/1. In terms of biological role, catalyzes the conversion of dihydroorotate to orotate with quinone as electron acceptor. The polypeptide is Dihydroorotate dehydrogenase (quinone) (Cupriavidus pinatubonensis (strain JMP 134 / LMG 1197) (Cupriavidus necator (strain JMP 134))).